The following is a 102-amino-acid chain: Putative pterin-4-alpha-carbinolamine dehydratase (102 aa).

This sequence belongs to the pterin-4-alpha-carbinolamine dehydratase family.

It catalyses the reaction (4aS,6R)-4a-hydroxy-L-erythro-5,6,7,8-tetrahydrobiopterin = (6R)-L-erythro-6,7-dihydrobiopterin + H2O. The sequence is that of Putative pterin-4-alpha-carbinolamine dehydratase from Burkholderia ambifaria (strain ATCC BAA-244 / DSM 16087 / CCUG 44356 / LMG 19182 / AMMD) (Burkholderia cepacia (strain AMMD)).